The primary structure comprises 578 residues: MDIQRSILIVALAVVSYLLVLQWNKDYGQPELPAASASMNTTQGLPDTPSASGTSSDVPTAQSSAAGSEAADKPVAVSDKLIQVKTDVLDLAIDPRGGDIVQLGLLQYPRRLDRPDVPFPLFDNGRERTYLAQSGLTGADGPDASSAGRPLFHSAQSSYQLADGQNELVVDLSFSHDGVNYIKRFTFHRGLKADCSDKEKAQKKIECINENAYQVGVSYLIDNQSGKTWSGNLFAQLKRDGSADPSSTTATGVSTYLGAAVWTPDSPYKKISTKDMDKEQFKESVQGGWVAWLQHYFVTAWVPTKGEQHQVMTRKDGQGNYIVGFTGPTLSVPAGSKVETDLTLYAGPKLQKHLKELSPGLELTVDYGFLWFIAQPIFWLLQHIHSLIGNWGWSIIALTVLIKLAFFPLSAASYRSMARMRAVSPKMQAIKEQHGDDRQKMSQAMMELYKKEKINPLGGCLPILVQMPVFLSLYWVLLESVEMRQAPWLGWITDLSVKDPFFILPIVMGGTMLIQQMLNPTPPDPMQAKVMKLMPIIFTFFFLWFPAGLVLYWVVNNCLSIAQQWYITRKIEAAAKTA.

A helical transmembrane segment spans residues I3–W23. The interval A34 to D72 is disordered. A compositionally biased stretch (polar residues) spans A37–A66. The next 5 helical transmembrane spans lie at L361–L381, L387–F407, L457–L477, P500–P520, and P535–V555.

It belongs to the OXA1/ALB3/YidC family. Type 1 subfamily. As to quaternary structure, interacts with the Sec translocase complex via SecD. Specifically interacts with transmembrane segments of nascent integral membrane proteins during membrane integration.

Its subcellular location is the cell inner membrane. Required for the insertion and/or proper folding and/or complex formation of integral membrane proteins into the membrane. Involved in integration of membrane proteins that insert both dependently and independently of the Sec translocase complex, as well as at least some lipoproteins. Aids folding of multispanning membrane proteins. The chain is Membrane protein insertase YidC from Pseudomonas aeruginosa (strain LESB58).